We begin with the raw amino-acid sequence, 262 residues long: Phosphate import ATP-binding protein PstB 2 (262 aa).

The ABC transporter domain occupies 18–257; the sequence is FVVRNLDLFY…PSDRRTEDYI (240 aa). 50 to 57 is an ATP binding site; the sequence is GPSGCGKS.

This sequence belongs to the ABC transporter superfamily. Phosphate importer (TC 3.A.1.7) family. As to quaternary structure, the complex is composed of two ATP-binding proteins (PstB), two transmembrane proteins (PstC and PstA) and a solute-binding protein (PstS).

It is found in the cell membrane. The catalysed reaction is phosphate(out) + ATP + H2O = ADP + 2 phosphate(in) + H(+). Functionally, part of the ABC transporter complex PstSACB involved in phosphate import. Responsible for energy coupling to the transport system. This Symbiobacterium thermophilum (strain DSM 24528 / JCM 14929 / IAM 14863 / T) protein is Phosphate import ATP-binding protein PstB 2.